A 58-amino-acid polypeptide reads, in one-letter code: Metallothionein (58 aa).

Residues 1 to 29 (PDPCCAEGTCECEEGKCKAGCKCTSCRCS) form a beta region. A divalent metal cation-binding residues include C4, C5, C10, C12, C17, C21, C23, C26, C28, C31, C34, C38, C40, C46, C50, C54, C56, and C57. The tract at residues 30–58 (PCEKCTSECECKSKEECAKNCTKPCSCCP) is alpha.

Functionally, metallothioneins have a high content of cysteine residues that bind various heavy metals. Class I MTS in crustacea are involved in the sequestration of elevated levels of heavy-metal ions. The polypeptide is Metallothionein (Potamon potamios).